The chain runs to 684 residues: Glycine--tRNA ligase beta subunit (684 aa).

This sequence belongs to the class-II aminoacyl-tRNA synthetase family. In terms of assembly, tetramer of two alpha and two beta subunits.

The protein localises to the cytoplasm. It carries out the reaction tRNA(Gly) + glycine + ATP = glycyl-tRNA(Gly) + AMP + diphosphate. The protein is Glycine--tRNA ligase beta subunit of Pseudomonas fluorescens (strain ATCC BAA-477 / NRRL B-23932 / Pf-5).